The following is a 642-amino-acid chain: Threonine--tRNA ligase (642 aa).

The 61-residue stretch at 1-61 (MPAITLPDGS…AADAQVVFVT (61 aa)) folds into the TGS domain. A catalytic region spans residues 243-536 (DHRRLGKEMD…LIEQYAGRFP (294 aa)). Positions 336, 387, and 513 each coordinate Zn(2+).

Belongs to the class-II aminoacyl-tRNA synthetase family. Homodimer. Requires Zn(2+) as cofactor.

The protein localises to the cytoplasm. The enzyme catalyses tRNA(Thr) + L-threonine + ATP = L-threonyl-tRNA(Thr) + AMP + diphosphate + H(+). Catalyzes the attachment of threonine to tRNA(Thr) in a two-step reaction: L-threonine is first activated by ATP to form Thr-AMP and then transferred to the acceptor end of tRNA(Thr). Also edits incorrectly charged L-seryl-tRNA(Thr). This chain is Threonine--tRNA ligase, found in Granulibacter bethesdensis (strain ATCC BAA-1260 / CGDNIH1).